The following is a 1004-amino-acid chain: 2-oxoglutarate dehydrogenase E1 component (1004 aa).

It belongs to the alpha-ketoglutarate dehydrogenase family. As to quaternary structure, homodimer. Part of the 2-oxoglutarate dehydrogenase (OGDH) complex composed of E1 (2-oxoglutarate dehydrogenase), E2 (dihydrolipoamide succinyltransferase) and E3 (dihydrolipoamide dehydrogenase); the complex contains multiple copies of the three enzymatic components (E1, E2 and E3). Thiamine diphosphate is required as a cofactor.

It carries out the reaction N(6)-[(R)-lipoyl]-L-lysyl-[protein] + 2-oxoglutarate + H(+) = N(6)-[(R)-S(8)-succinyldihydrolipoyl]-L-lysyl-[protein] + CO2. E1 component of the 2-oxoglutarate dehydrogenase (OGDH) complex which catalyzes the decarboxylation of 2-oxoglutarate, the first step in the conversion of 2-oxoglutarate to succinyl-CoA and CO(2). The sequence is that of 2-oxoglutarate dehydrogenase E1 component from Brucella canis (strain ATCC 23365 / NCTC 10854 / RM-666).